Reading from the N-terminus, the 169-residue chain is S-ribosylhomocysteine lyase (169 aa).

H54, H58, and C128 together coordinate Fe cation.

It belongs to the LuxS family. As to quaternary structure, homodimer. Requires Fe cation as cofactor.

The catalysed reaction is S-(5-deoxy-D-ribos-5-yl)-L-homocysteine = (S)-4,5-dihydroxypentane-2,3-dione + L-homocysteine. Functionally, involved in the synthesis of autoinducer 2 (AI-2) which is secreted by bacteria and is used to communicate both the cell density and the metabolic potential of the environment. The regulation of gene expression in response to changes in cell density is called quorum sensing. Catalyzes the transformation of S-ribosylhomocysteine (RHC) to homocysteine (HC) and 4,5-dihydroxy-2,3-pentadione (DPD). The sequence is that of S-ribosylhomocysteine lyase from Shewanella frigidimarina (strain NCIMB 400).